A 478-amino-acid polypeptide reads, in one-letter code: Cytochrome c-552 (478 aa).

Positions 1–26 are cleaved as a signal peptide; that stretch reads MARKTLRARRFFSLIFPFFFITSVYA. Position 94 (His-94) interacts with heme c. Heme-binding residues include Cys-122, Cys-125, and Lys-126. The heme c site is built by Cys-160, Cys-163, His-164, Cys-209, Cys-212, and His-213. 4 residues coordinate Ca(2+): Glu-215, Tyr-216, Lys-261, and Gln-263. A substrate-binding site is contributed by Tyr-216. Substrate is bound at residue His-264. The heme c site is built by His-275, Cys-282, Cys-285, His-286, His-301, Cys-314, Cys-317, His-318, and His-393.

The protein belongs to the cytochrome c-552 family. Requires Ca(2+) as cofactor. Heme c is required as a cofactor.

It is found in the periplasm. It catalyses the reaction 6 Fe(III)-[cytochrome c] + NH4(+) + 2 H2O = 6 Fe(II)-[cytochrome c] + nitrite + 8 H(+). Its pathway is nitrogen metabolism; nitrate reduction (assimilation). Catalyzes the reduction of nitrite to ammonia, consuming six electrons in the process. The polypeptide is Cytochrome c-552 (Salmonella paratyphi A (strain ATCC 9150 / SARB42)).